Consider the following 373-residue polypeptide: Gametogenetin-binding protein 1 (373 aa).

2 disordered regions span residues 26 to 113 (VGSK…GSQT) and 237 to 268 (KAQRPDADAPQFALKDSSPTEERGEREEAVDE). Positions 36–49 (NRPLNRSQPSSSPE) are enriched in polar residues. The segment at 226-373 (LYKQLQKSAM…DEMGNWPPPE (148 aa)) is required for induction of mitochondrial fragmentation. The span at 254–263 (SPTEERGERE) shows a compositional bias: basic and acidic residues. Residues 301–373 (KTFRSTDTVG…DEMGNWPPPE (73 aa)) are interaction with GGN.

In terms of assembly, interacts with CCDC159. Interacts with GGN.

It is found in the cytoplasm. The protein localises to the membrane. It localises to the golgi apparatus. The protein resides in the mitochondrion intermembrane space. In terms of biological role, induces mitochondrial fragmentation, possibly by promoting DNM1L-dependent fission and may play a role in mitochondrial morphogenesis during spermatogenesis. This is Gametogenetin-binding protein 1 (Ggnbp1) from Rattus norvegicus (Rat).